Consider the following 228-residue polypeptide: Thiamine-phosphate synthase (228 aa).

4-amino-2-methyl-5-(diphosphooxymethyl)pyrimidine-binding positions include 57–61 (QLRDK) and Asn89. Asp90 and Asp109 together coordinate Mg(2+). Ser128 lines the 4-amino-2-methyl-5-(diphosphooxymethyl)pyrimidine pocket. 154–156 (TPS) is a binding site for 2-[(2R,5Z)-2-carboxy-4-methylthiazol-5(2H)-ylidene]ethyl phosphate. Lys157 serves as a coordination point for 4-amino-2-methyl-5-(diphosphooxymethyl)pyrimidine. 2-[(2R,5Z)-2-carboxy-4-methylthiazol-5(2H)-ylidene]ethyl phosphate contacts are provided by residues Gly185 and 205–206 (IS).

The protein belongs to the thiamine-phosphate synthase family. Requires Mg(2+) as cofactor.

It carries out the reaction 2-[(2R,5Z)-2-carboxy-4-methylthiazol-5(2H)-ylidene]ethyl phosphate + 4-amino-2-methyl-5-(diphosphooxymethyl)pyrimidine + 2 H(+) = thiamine phosphate + CO2 + diphosphate. The enzyme catalyses 2-(2-carboxy-4-methylthiazol-5-yl)ethyl phosphate + 4-amino-2-methyl-5-(diphosphooxymethyl)pyrimidine + 2 H(+) = thiamine phosphate + CO2 + diphosphate. The catalysed reaction is 4-methyl-5-(2-phosphooxyethyl)-thiazole + 4-amino-2-methyl-5-(diphosphooxymethyl)pyrimidine + H(+) = thiamine phosphate + diphosphate. Its pathway is cofactor biosynthesis; thiamine diphosphate biosynthesis; thiamine phosphate from 4-amino-2-methyl-5-diphosphomethylpyrimidine and 4-methyl-5-(2-phosphoethyl)-thiazole: step 1/1. Its function is as follows. Condenses 4-methyl-5-(beta-hydroxyethyl)thiazole monophosphate (THZ-P) and 2-methyl-4-amino-5-hydroxymethyl pyrimidine pyrophosphate (HMP-PP) to form thiamine monophosphate (TMP). The sequence is that of Thiamine-phosphate synthase from Roseiflexus castenholzii (strain DSM 13941 / HLO8).